Consider the following 388-residue polypeptide: Succinate--CoA ligase [ADP-forming] subunit beta (388 aa).

Residues 9–244 enclose the ATP-grasp domain; it reads KQLFAEYGLP…PSQDDPREAH (236 aa). ATP contacts are provided by residues Lys-46, 53–55, Glu-99, Thr-102, and Glu-107; that span reads GRG. The Mg(2+) site is built by Asn-199 and Asp-213. Substrate contacts are provided by residues Asn-264 and 321-323; that span reads GIV.

This sequence belongs to the succinate/malate CoA ligase beta subunit family. In terms of assembly, heterotetramer of two alpha and two beta subunits. Mg(2+) serves as cofactor.

It carries out the reaction succinate + ATP + CoA = succinyl-CoA + ADP + phosphate. It catalyses the reaction GTP + succinate + CoA = succinyl-CoA + GDP + phosphate. Its pathway is carbohydrate metabolism; tricarboxylic acid cycle; succinate from succinyl-CoA (ligase route): step 1/1. Its function is as follows. Succinyl-CoA synthetase functions in the citric acid cycle (TCA), coupling the hydrolysis of succinyl-CoA to the synthesis of either ATP or GTP and thus represents the only step of substrate-level phosphorylation in the TCA. The beta subunit provides nucleotide specificity of the enzyme and binds the substrate succinate, while the binding sites for coenzyme A and phosphate are found in the alpha subunit. The sequence is that of Succinate--CoA ligase [ADP-forming] subunit beta from Aeromonas hydrophila subsp. hydrophila (strain ATCC 7966 / DSM 30187 / BCRC 13018 / CCUG 14551 / JCM 1027 / KCTC 2358 / NCIMB 9240 / NCTC 8049).